Reading from the N-terminus, the 129-residue chain is Small ribosomal subunit protein uS12 (129 aa).

Residue Asp-89 is modified to 3-methylthioaspartic acid.

It belongs to the universal ribosomal protein uS12 family. Part of the 30S ribosomal subunit. Contacts proteins S8 and S17. May interact with IF1 in the 30S initiation complex.

Functionally, with S4 and S5 plays an important role in translational accuracy. In terms of biological role, interacts with and stabilizes bases of the 16S rRNA that are involved in tRNA selection in the A site and with the mRNA backbone. Located at the interface of the 30S and 50S subunits, it traverses the body of the 30S subunit contacting proteins on the other side and probably holding the rRNA structure together. The combined cluster of proteins S8, S12 and S17 appears to hold together the shoulder and platform of the 30S subunit. The polypeptide is Small ribosomal subunit protein uS12 (Rickettsia akari (strain Hartford)).